The chain runs to 339 residues: Phomopsene synthase (339 aa).

Asp-89, Asp-94, Asn-224, Ser-228, and Glu-232 together coordinate Mg(2+).

Belongs to the terpene synthase family. The cofactor is Mg(2+).

It catalyses the reaction (2E,6E,10E)-geranylgeranyl diphosphate = phomopsene + diphosphate. The enzyme catalyses (2E,6E,10E)-geranylgeranyl diphosphate = allokutznerene + diphosphate. Its pathway is secondary metabolite biosynthesis; terpenoid biosynthesis. Its function is as follows. Diterpene synthase that catalyzes the conversion of geranylgeranyl diphosphate (GGPP) to phomopsene, a diterpene previously reported from the fungus P.amygdali. Phomopsene is the main product, but the enzyme can also produce allokutznerene (about 50% of phomopsene production activity) and traces of spiroviolene. Cannot use geranyl diphosphate (GPP), farnesyl diphosphate (FPP) and geranylfarnesyl diphosphate (GFPP). The protein is Phomopsene synthase of Allokutzneria albata (Kibdelosporangium albatum).